The following is a 215-amino-acid chain: Small ribosomal subunit protein uS3 (215 aa).

Residues 38–107 enclose the KH type-2 domain; it reads IRDYIKKTYH…KFQLNIEEVK (70 aa).

The protein belongs to the universal ribosomal protein uS3 family. As to quaternary structure, part of the 30S ribosomal subunit. Forms a tight complex with proteins S10 and S14.

Binds the lower part of the 30S subunit head. Binds mRNA in the 70S ribosome, positioning it for translation. The protein is Small ribosomal subunit protein uS3 of Kosmotoga olearia (strain ATCC BAA-1733 / DSM 21960 / TBF 19.5.1).